Here is a 119-residue protein sequence, read N- to C-terminus: Protein TusC (119 aa).

It belongs to the DsrF/TusC family. Heterohexamer, formed by a dimer of trimers. The hexameric TusBCD complex contains 2 copies each of TusB, TusC and TusD. The TusBCD complex interacts with TusE.

The protein resides in the cytoplasm. In terms of biological role, part of a sulfur-relay system required for 2-thiolation of 5-methylaminomethyl-2-thiouridine (mnm(5)s(2)U) at tRNA wobble positions. The sequence is that of Protein TusC from Klebsiella pneumoniae (strain 342).